A 148-amino-acid polypeptide reads, in one-letter code: uncharacterized protein (148 aa).

Residues 3-64 (IDDLDRKILS…KLNYEKLGYE (62 aa)) enclose the HTH asnC-type domain. The segment at residues 22–41 (YREIAKKLNVAVGTIYNRIK) is a DNA-binding region (H-T-H motif).

This is an uncharacterized protein from Pyrococcus furiosus (strain ATCC 43587 / DSM 3638 / JCM 8422 / Vc1).